Here is a 354-residue protein sequence, read N- to C-terminus: Arginase (354 aa).

Mn(2+) is bound by residues H136, D159, H161, and D163. Residues N165, S172, and D217 each coordinate L-arginine. Residues D266 and D268 each coordinate Mn(2+).

This sequence belongs to the arginase family. As to quaternary structure, homotrimer; oligomerization is dependent on Mn(2+) binding. It depends on Mn(2+) as a cofactor.

It carries out the reaction L-arginine + H2O = urea + L-ornithine. It participates in nitrogen metabolism; urea cycle; L-ornithine and urea from L-arginine: step 1/1. Functionally, catalyzes the hydrolysis of L-arginine into urea and L-ornithine, which is a precursor for polyamine biosynthesis. May play a role in parasite intra-hepatic development during the host liver stage. In Plasmodium berghei (strain Anka), this protein is Arginase.